Consider the following 166-residue polypeptide: Large ribosomal subunit protein uL10 (166 aa).

Belongs to the universal ribosomal protein uL10 family. As to quaternary structure, part of the ribosomal stalk of the 50S ribosomal subunit. The N-terminus interacts with L11 and the large rRNA to form the base of the stalk. The C-terminus forms an elongated spine to which L12 dimers bind in a sequential fashion forming a multimeric L10(L12)X complex.

Functionally, forms part of the ribosomal stalk, playing a central role in the interaction of the ribosome with GTP-bound translation factors. This Ureaplasma parvum serovar 3 (strain ATCC 27815 / 27 / NCTC 11736) protein is Large ribosomal subunit protein uL10.